The primary structure comprises 607 residues: UvrABC system protein C (607 aa).

Residues 16 to 94 (GRPGVYRMFD…IKEWRPPYNI (79 aa)) form the GIY-YIG domain. Residues 203–238 (QQLGNELNAEMEKAAMALDFEKAAELRDQIALLRRV) form the UVR domain.

It belongs to the UvrC family. Interacts with UvrB in an incision complex.

Its subcellular location is the cytoplasm. Functionally, the UvrABC repair system catalyzes the recognition and processing of DNA lesions. UvrC both incises the 5' and 3' sides of the lesion. The N-terminal half is responsible for the 3' incision and the C-terminal half is responsible for the 5' incision. This Pseudomonas putida (strain ATCC 700007 / DSM 6899 / JCM 31910 / BCRC 17059 / LMG 24140 / F1) protein is UvrABC system protein C.